Here is a 108-residue protein sequence, read N- to C-terminus: Placenta-specific protein 9 (108 aa).

An N-terminal signal peptide occupies residues Met1–Gly19. 2 disordered regions span residues Thr18–Cys49 and Ser89–Phe108. Positions Ala54 to Leu91 form a coiled coil.

This sequence belongs to the PLAC9 family. Highly expressed in placenta, and weakly in ovary, testis, and lung.

It is found in the secreted. In Mus musculus (Mouse), this protein is Placenta-specific protein 9 (Plac9).